The sequence spans 210 residues: Redox-sensing transcriptional repressor Rex (210 aa).

Positions 16–55 (IYSRFLKRLDKKGITTVSSGDIAEGVGVSPAQVRKDLAYF) form a DNA-binding region, H-T-H motif. 90-95 (GAGNLG) lines the NAD(+) pocket.

This sequence belongs to the transcriptional regulatory Rex family. In terms of assembly, homodimer.

The protein resides in the cytoplasm. In terms of biological role, modulates transcription in response to changes in cellular NADH/NAD(+) redox state. This Desulforamulus reducens (strain ATCC BAA-1160 / DSM 100696 / MI-1) (Desulfotomaculum reducens) protein is Redox-sensing transcriptional repressor Rex.